Consider the following 100-residue polypeptide: UPF0251 protein VV2_0946 (100 aa).

This sequence belongs to the UPF0251 family.

This Vibrio vulnificus (strain CMCP6) protein is UPF0251 protein VV2_0946.